A 213-amino-acid polypeptide reads, in one-letter code: Large ribosomal subunit protein uL3 (213 aa).

The protein belongs to the universal ribosomal protein uL3 family. Part of the 50S ribosomal subunit. Forms a cluster with proteins L14 and L19.

Its function is as follows. One of the primary rRNA binding proteins, it binds directly near the 3'-end of the 23S rRNA, where it nucleates assembly of the 50S subunit. The chain is Large ribosomal subunit protein uL3 from Kosmotoga olearia (strain ATCC BAA-1733 / DSM 21960 / TBF 19.5.1).